The following is a 101-amino-acid chain: Small ribosomal subunit protein uS14 (101 aa).

The protein belongs to the universal ribosomal protein uS14 family. Part of the 30S ribosomal subunit. Contacts proteins S3 and S10.

Binds 16S rRNA, required for the assembly of 30S particles and may also be responsible for determining the conformation of the 16S rRNA at the A site. This chain is Small ribosomal subunit protein uS14, found in Proteus mirabilis (strain HI4320).